Reading from the N-terminus, the 634-residue chain is Sodium-dependent neutral amino acid transporter B(0)AT1 (634 aa).

Residues 1 to 41 (MVRLVLPNPGLEDRIPSLDELEVIEKEEASSRPKWDNKAQY) are Cytoplasmic-facing. At S17 the chain carries Phosphoserine. Residues 42–62 (MLTCVGFCVGLGNVWRFPYLC) form a helical membrane-spanning segment. Residues 63–65 (QSH) lie on the Extracellular side of the membrane. Residues 66-86 (GGGAFMIPFLILLVLEGIPLL) traverse the membrane as a helical segment. At 87 to 119 (HLEFAIGQRLRKGSVGVWSSIHPALKGVGIASM) the chain is on the cytoplasmic side. The helical transmembrane segment at 120-140 (FVSFMVGLYYNTIIAWVMWYF) threads the bilayer. The Extracellular segment spans residues 141–192 (FNSFQEPLPWSECPLNQNQTGYVEECAKSSSVDYFWYRETLNISTSISDSGS). N-linked (GlcNAc...) asparagine glycans are attached at residues N158 and N182. A helical transmembrane segment spans residues 193 to 213 (IQWWILLCLTCAWSVLYVCTI). Residues 214-221 (RGIETTGK) are Cytoplasmic-facing. Residues 222–242 (AVYITSTLPYVVLTIFLIRGL) traverse the membrane as a helical segment. The Extracellular portion of the chain corresponds to 243–268 (TLKGATNGIVFLFTPNITELSNPNTW). N258 carries an N-linked (GlcNAc...) asparagine glycan. The chain crosses the membrane as a helical span at residues 269–289 (LDAGAQVFYSFSLAFGGLISF). Residues 290 to 304 (SSYNSVHNNCEMDSV) are Cytoplasmic-facing. Residues 305–325 (IVSIINGFTSVYAATVVYSII) form a helical membrane-spanning segment. Residues 326-413 (GFRATERFDD…TEAITKMPVS (88 aa)) are Extracellular-facing. N-linked (GlcNAc...) asparagine glycosylation is found at N354 and N368. Residues 414-434 (PLWSVLFFIMLFCLGLSSMFG) form a helical membrane-spanning segment. The Cytoplasmic segment spans residues 435–456 (NMEGVVVPLQDLNITPKKWPKE). Residues 457 to 477 (LLTGLICLGTYLIAFIFTLNS) traverse the membrane as a helical segment. Residues 478–490 (GQYWLSLLDSYAG) lie on the Extracellular side of the membrane. Residues 491 to 511 (SIPLLIIAFCEMFAVVYVYGV) traverse the membrane as a helical segment. The Cytoplasmic segment spans residues 512–531 (DRFNKDIEFMIGHKPNIFWQ). The chain crosses the membrane as a helical span at residues 532-552 (VTWRVVSPLIMLVIFLFFFVI). The Extracellular segment spans residues 553-581 (EVNKQLMYSVWDPDYEEFPKSQKVPYPDW). The chain crosses the membrane as a helical span at residues 582-602 (VYAVVVIVAGVPCLTIPCFAI). Over 603–634 (YKLIRNYCQKSGDQHGLVNALSTASVNGDLKN) the chain is Cytoplasmic. The residue at position 627 (S627) is a Phosphoserine.

The protein belongs to the sodium:neurotransmitter symporter (SNF) (TC 2.A.22) family. SLC6A19 subfamily. In terms of assembly, interacts in a tissue-specific manner with ACE2 in small intestine and with CLTRN in the kidney. Interacts with CLTRN; this interaction is required for trafficking of SLC6A19 to the plasma membrane and for its catalytic activation in kidneys. Interacts with ACE2; this interaction is required for trafficking of SLC6A19 to the plasma membrane and for its catalytic activation in intestine. Interacts with ANPEP; the interaction positively regulates its amino acid transporter activity.

It localises to the membrane. The enzyme catalyses L-alanine(in) + Na(+)(in) = L-alanine(out) + Na(+)(out). It carries out the reaction L-cysteine(in) + Na(+)(in) = L-cysteine(out) + Na(+)(out). It catalyses the reaction L-glutamine(in) + Na(+)(in) = L-glutamine(out) + Na(+)(out). The catalysed reaction is glycine(in) + Na(+)(in) = glycine(out) + Na(+)(out). The enzyme catalyses L-isoleucine(in) + Na(+)(in) = L-isoleucine(out) + Na(+)(out). It carries out the reaction L-leucine(in) + Na(+)(in) = L-leucine(out) + Na(+)(out). It catalyses the reaction L-methionine(in) + Na(+)(in) = L-methionine(out) + Na(+)(out). The catalysed reaction is L-phenylalanine(in) + Na(+)(in) = L-phenylalanine(out) + Na(+)(out). The enzyme catalyses L-serine(in) + Na(+)(in) = L-serine(out) + Na(+)(out). It carries out the reaction L-tryptophan(in) + Na(+)(in) = L-tryptophan(out) + Na(+)(out). It catalyses the reaction L-tyrosine(in) + Na(+)(in) = L-tyrosine(out) + Na(+)(out). The catalysed reaction is L-valine(in) + Na(+)(in) = L-valine(out) + Na(+)(out). Functionally, transporter that mediates resorption of neutral amino acids across the apical membrane of renal and intestinal epithelial cells. This uptake is sodium-dependent and chloride-independent. Requires CLTRN in kidney or ACE2 in intestine for cell surface expression and amino acid transporter activity. The protein is Sodium-dependent neutral amino acid transporter B(0)AT1 of Rattus norvegicus (Rat).